Consider the following 241-residue polypeptide: Phosphoribosylaminoimidazole-succinocarboxamide synthase (241 aa).

Belongs to the SAICAR synthetase family.

The catalysed reaction is 5-amino-1-(5-phospho-D-ribosyl)imidazole-4-carboxylate + L-aspartate + ATP = (2S)-2-[5-amino-1-(5-phospho-beta-D-ribosyl)imidazole-4-carboxamido]succinate + ADP + phosphate + 2 H(+). The protein operates within purine metabolism; IMP biosynthesis via de novo pathway; 5-amino-1-(5-phospho-D-ribosyl)imidazole-4-carboxamide from 5-amino-1-(5-phospho-D-ribosyl)imidazole-4-carboxylate: step 1/2. The protein is Phosphoribosylaminoimidazole-succinocarboxamide synthase of Oenococcus oeni (strain ATCC BAA-331 / PSU-1).